We begin with the raw amino-acid sequence, 365 residues long: Probable G-protein coupled receptor 142 (365 aa).

Residues M1 to C66 are Extracellular-facing. A glycan (N-linked (GlcNAc...) asparagine) is linked at N44. A helical membrane pass occupies residues V67–A87. The Cytoplasmic portion of the chain corresponds to L88 to Y102. Residues L103–L123 form a helical membrane-spanning segment. At L124–T140 the chain is on the extracellular side. Residues A141 to V161 form a helical membrane-spanning segment. The Cytoplasmic segment spans residues D162 to A185. A helical membrane pass occupies residues I186 to V206. Residues W207–H224 lie on the Extracellular side of the membrane. The helical transmembrane segment at C225–L245 threads the bilayer. The Cytoplasmic segment spans residues R246 to A264. The chain crosses the membrane as a helical span at residues I265–L285. Topologically, residues Y286–D304 are extracellular. The helical transmembrane segment at I305 to S325 threads the bilayer. At K326–L365 the chain is on the cytoplasmic side.

The protein belongs to the G-protein coupled receptor 1 family.

It localises to the cell membrane. Its function is as follows. Orphan receptor. The polypeptide is Probable G-protein coupled receptor 142 (Gpr142) (Mus musculus (Mouse)).